The chain runs to 290 residues: GTPase Era (290 aa).

Positions 2–168 (KVCIISILGR…IEILKEYAYN (167 aa)) constitute an Era-type G domain. A G1 region spans residues 10 to 17 (GRPNVGKS). Residue 10–17 (GRPNVGKS) coordinates GTP. The tract at residues 36–40 (QTTRD) is G2. Residues 57-60 (DTPG) are G3. Residues 57 to 61 (DTPGI) and 118 to 121 (SKID) each bind GTP. Residues 118–121 (SKID) form a G4 region. A G5 region spans residues 147–149 (VSN). In terms of domain architecture, KH type-2 spans 199–275 (LTDELPHSIA…TLNLKVKVSN (77 aa)).

This sequence belongs to the TRAFAC class TrmE-Era-EngA-EngB-Septin-like GTPase superfamily. Era GTPase family. In terms of assembly, monomer.

It is found in the cytoplasm. The protein resides in the cell membrane. In terms of biological role, an essential GTPase that binds both GDP and GTP, with rapid nucleotide exchange. Plays a role in 16S rRNA processing and 30S ribosomal subunit biogenesis and possibly also in cell cycle regulation and energy metabolism. This is GTPase Era from Mycoplasmopsis agalactiae (strain NCTC 10123 / CIP 59.7 / PG2) (Mycoplasma agalactiae).